We begin with the raw amino-acid sequence, 264 residues long: Ribosomal protein L11 methyltransferase (264 aa).

4 residues coordinate S-adenosyl-L-methionine: T116, G137, D159, and N200.

The protein belongs to the methyltransferase superfamily. PrmA family.

It localises to the cytoplasm. The catalysed reaction is L-lysyl-[protein] + 3 S-adenosyl-L-methionine = N(6),N(6),N(6)-trimethyl-L-lysyl-[protein] + 3 S-adenosyl-L-homocysteine + 3 H(+). Methylates ribosomal protein L11. This is Ribosomal protein L11 methyltransferase from Thermotoga neapolitana.